Here is a 196-residue protein sequence, read N- to C-terminus: Transmembrane protein 126A (196 aa).

At 1–34 the chain is on the mitochondrial matrix side; it reads MESHKPSTNKDDLIFNIIPRKIKQLPESDRNLLE. A helical transmembrane segment spans residues 35–55; it reads YGSAYIGLNAAFGGLIANSLF. The Mitochondrial intermembrane segment spans residues 56–57; the sequence is RR. Residues 58-78 form a helical membrane-spanning segment; the sequence is ILNVTQARVASSLPMAVIPFL. The Mitochondrial matrix portion of the chain corresponds to 79–106; sequence TANLSYHSFVSLPLSTGNLNCEICTTTR. A helical membrane pass occupies residues 107-127; that stretch reads GTLVGFVLGGLYPILLAIPVN. The Mitochondrial intermembrane portion of the chain corresponds to 128–159; sequence GGLAARYESSPLPQRGNIFNYWITISKPVFRK. Residues 160-176 traverse the membrane as a helical segment; the sequence is MLFPTLLQTAFAAYLGS. Topologically, residues 177–196 are mitochondrial matrix; that stretch reads RQYKLLIKALQLPEPDLEIQ.

The protein belongs to the TMEM126 family. In terms of assembly, interacts with OXA1L; promoting cotranslational quality control in mitochondria.

It localises to the mitochondrion inner membrane. Its function is as follows. Protein required for the cotranslational protein quality control in the inner membrane of the mitochondria. Associates with newly synthesized polypeptides and may act as a chaperone that cooperates with OXA1L for the insertion of newly synthesized mitochondrial proteins into the inner membrane. Required for the assembly of the ND4 module of mitochondrial complex I. In Rattus norvegicus (Rat), this protein is Transmembrane protein 126A (Tmem126a).